The primary structure comprises 125 residues: Apoptosis inhibitor Rv3655c (125 aa).

Positions methionine 1 to alanine 33 are cleaved as a signal peptide.

In terms of assembly, interacts with human E3 ubiquitin-protein ligase RNF213.

It localises to the secreted. It is found in the host cytoplasm. Its function is as follows. Effector protein that participates in the suppression of macrophage apoptosis by blocking the extrinsic pathway. Interferes with caspase-8 activation and binds to the host E3 ubiquitin-protein ligase RNF213, whose fusion partners have anti-apoptotic function. The chain is Apoptosis inhibitor Rv3655c from Mycobacterium tuberculosis (strain ATCC 25618 / H37Rv).